Consider the following 488-residue polypeptide: 3-octaprenyl-4-hydroxybenzoate carboxy-lyase (488 aa).

Asn-172 serves as a coordination point for Mn(2+). Residues 175-177, 189-191, and 194-195 contribute to the prenylated FMN site; these read IYR, RWL, and RG. Glu-238 lines the Mn(2+) pocket. Asp-287 functions as the Proton donor in the catalytic mechanism.

This sequence belongs to the UbiD family. As to quaternary structure, homohexamer. The cofactor is prenylated FMN. Mn(2+) serves as cofactor.

Its subcellular location is the cell membrane. The enzyme catalyses a 4-hydroxy-3-(all-trans-polyprenyl)benzoate + H(+) = a 2-(all-trans-polyprenyl)phenol + CO2. It participates in cofactor biosynthesis; ubiquinone biosynthesis. Its function is as follows. Catalyzes the decarboxylation of 3-octaprenyl-4-hydroxy benzoate to 2-octaprenylphenol, an intermediate step in ubiquinone biosynthesis. The chain is 3-octaprenyl-4-hydroxybenzoate carboxy-lyase from Legionella pneumophila (strain Lens).